We begin with the raw amino-acid sequence, 1104 residues long: Inhibitory regulator protein BUD2/CLA2 (1104 aa).

Ser2 bears the N-acetylserine mark. Residues 316–444 form the C2 domain; the sequence is RSEYLSITGS…RYNKETRLPI (129 aa). Residues 536-753 form the Ras-GAP domain; that stretch reads AKIDGTVSRI…NDLLDYIDKM (218 aa). Position 854 is a phosphoserine (Ser854). The tract at residues 1027–1104 is disordered; that stretch reads NPKSSNKTSV…FKKKKETGGS (78 aa). Composition is skewed to polar residues over residues 1029-1043 and 1052-1069; these read KSSNKTSVHGTSSEN and LPNSQGKGNLGNRFSPTK. Residues 1090 to 1104 are compositionally biased toward basic residues; the sequence is KLTRWFKKKKETGGS.

In terms of biological role, stimulates the GTPase activity of BUD1/RSR1. Participates in the regulation of bud-site selection. The protein is Inhibitory regulator protein BUD2/CLA2 (BUD2) of Saccharomyces cerevisiae (strain ATCC 204508 / S288c) (Baker's yeast).